A 285-amino-acid polypeptide reads, in one-letter code: Probable ribosomal RNA small subunit methyltransferase A (285 aa).

S-adenosyl-L-methionine-binding residues include His29, Leu31, Gly58, Glu79, Asp107, and Asn122.

It belongs to the class I-like SAM-binding methyltransferase superfamily. rRNA adenine N(6)-methyltransferase family. RsmA subfamily.

It localises to the cytoplasm. In terms of biological role, specifically dimethylates two adjacent adenosines in the loop of a conserved hairpin near the 3'-end of 16S rRNA in the 30S particle. May play a critical role in biogenesis of 30S subunits. The protein is Probable ribosomal RNA small subunit methyltransferase A of Haloarcula marismortui (strain ATCC 43049 / DSM 3752 / JCM 8966 / VKM B-1809) (Halobacterium marismortui).